We begin with the raw amino-acid sequence, 144 residues long: Transcriptional regulator SlyA (144 aa).

The region spanning 2–135 is the HTH marR-type domain; sequence ESSLGSDLAR…LNNIIAKLER (134 aa). The segment at residues 49 to 72 is a DNA-binding region (H-T-H motif); that stretch reads QIQLAKAIGIEQPSLVRTLDQLES.

It belongs to the SlyA family. In terms of assembly, homodimer.

Transcription regulator that can specifically activate or repress expression of target genes. This Blochmanniella floridana protein is Transcriptional regulator SlyA.